Here is a 57-residue protein sequence, read N- to C-terminus: Large ribosomal subunit protein bL32B (57 aa).

Belongs to the bacterial ribosomal protein bL32 family.

This is Large ribosomal subunit protein bL32B from Listeria welshimeri serovar 6b (strain ATCC 35897 / DSM 20650 / CCUG 15529 / CIP 8149 / NCTC 11857 / SLCC 5334 / V8).